A 194-amino-acid chain; its full sequence is Putative lipoprotein LppK (194 aa).

Residues Met-1 to Gly-26 form the signal peptide. Residue Cys-27 is the site of N-palmitoyl cysteine attachment. Cys-27 carries S-diacylglycerol cysteine lipidation. The interval Gly-174–His-194 is disordered. Residues Ile-185–His-194 show a composition bias toward pro residues.

The protein belongs to the MTB12 family.

It is found in the cell membrane. This Mycobacterium leprae (strain TN) protein is Putative lipoprotein LppK (lppK).